The primary structure comprises 311 residues: MAITAAQINELRKATGAGMLDCKKALEEVDGDMEQAVDYLRKKGLAAASKKAGRAATEGMVAAAVTANGNAGVLVEINSETDFVAKNDKFQDFVKQVADHVLQKNPANIEELMAQPFAGDASKTVQTLLNEAIAVIGENMQIRRFVSFSADGGAVGSYIHAGGKIGVLVEATCDKADVCSSEAFATVLKDVAMHTAAASPQFLCREDVSADVLEREKEIYRAKARETGKPDNIIEKIIGGQVNKFYGDICLLEQVYVKDTDKTVQQYIDASAKQLGCSITLKRFAKFVLGEGLEKKESDFAAEVAAAAGLK.

Positions 81-84 are involved in Mg(2+) ion dislocation from EF-Tu; it reads TDFV.

This sequence belongs to the EF-Ts family.

It localises to the cytoplasm. Its function is as follows. Associates with the EF-Tu.GDP complex and induces the exchange of GDP to GTP. It remains bound to the aminoacyl-tRNA.EF-Tu.GTP complex up to the GTP hydrolysis stage on the ribosome. The chain is Elongation factor Ts from Trichlorobacter lovleyi (strain ATCC BAA-1151 / DSM 17278 / SZ) (Geobacter lovleyi).